The sequence spans 191 residues: Cell division protein SepF (191 aa).

The disordered stretch occupies residues 21–96 (EVEEPAVASV…NQQPAQEKTT (76 aa)). The segment covering 25-56 (PAVASVKRQQDAAQPASQQQKAQSHQYHQSAS) has biased composition (low complexity). 2 stretches are compositionally biased toward polar residues: residues 57-69 (RPSQQQVQSGQNR) and 86-95 (HNQQPAQEKT).

Belongs to the SepF family. Homodimer. Interacts with FtsZ.

It localises to the cytoplasm. Cell division protein that is part of the divisome complex and is recruited early to the Z-ring. Probably stimulates Z-ring formation, perhaps through the cross-linking of FtsZ protofilaments. Its function overlaps with FtsA. This is Cell division protein SepF from Streptococcus mutans serotype c (strain ATCC 700610 / UA159).